The following is a 414-amino-acid chain: Imidazolonepropionase (414 aa).

Fe(3+) is bound by residues H95 and H97. Zn(2+) is bound by residues H95 and H97. 4-imidazolone-5-propanoate-binding residues include R104, Y162, and H189. Y162 is an N-formimidoyl-L-glutamate binding site. Fe(3+) is bound at residue H252. H252 is a binding site for Zn(2+). Q255 provides a ligand contact to 4-imidazolone-5-propanoate. D326 is a binding site for Fe(3+). Residue D326 participates in Zn(2+) binding. Residues N328 and G330 each contribute to the N-formimidoyl-L-glutamate site. S331 is a binding site for 4-imidazolone-5-propanoate.

Belongs to the metallo-dependent hydrolases superfamily. HutI family. Zn(2+) is required as a cofactor. It depends on Fe(3+) as a cofactor.

Its subcellular location is the cytoplasm. It carries out the reaction 4-imidazolone-5-propanoate + H2O = N-formimidoyl-L-glutamate. It participates in amino-acid degradation; L-histidine degradation into L-glutamate; N-formimidoyl-L-glutamate from L-histidine: step 3/3. In terms of biological role, catalyzes the hydrolytic cleavage of the carbon-nitrogen bond in imidazolone-5-propanoate to yield N-formimidoyl-L-glutamate. It is the third step in the universal histidine degradation pathway. The polypeptide is Imidazolonepropionase (Streptomyces avermitilis (strain ATCC 31267 / DSM 46492 / JCM 5070 / NBRC 14893 / NCIMB 12804 / NRRL 8165 / MA-4680)).